The chain runs to 287 residues: Cis-prenyltransferase 7, chloroplastic (287 aa).

The N-terminal 34 residues, M1–C34, are a transit peptide targeting the chloroplast. Residue D61 is part of the active site.

This sequence belongs to the UPP synthase family. Mg(2+) serves as cofactor. As to expression, expressed in leaf trichomes and stem trichomes.

The protein resides in the plastid. The protein localises to the chloroplast. Uses geranylgeranyl diphosphate to catalyze the cis-prenyl chain elongation and produce polyprenyl diphosphate with a chain of 35 carbons. In Solanum lycopersicum (Tomato), this protein is Cis-prenyltransferase 7, chloroplastic.